The primary structure comprises 594 residues: Potassium-transporting ATPase potassium-binding subunit (594 aa).

12 helical membrane passes run 4 to 24 (QFFG…PFLG), 65 to 85 (QYAV…YALQ), 136 to 156 (ALTV…FALI), 179 to 199 (LYVL…QGVI), 287 to 307 (LEML…GEMV), 314 to 334 (VAIL…TQNA), 361 to 381 (FGVA…CGAV), 390 to 410 (AMGG…FGGV), 413 to 433 (GLYG…LMIG), 450 to 470 (MVSI…ALAV), 518 to 538 (LLGL…LALA), and 560 to 580 (LFIV…YVPA).

Belongs to the KdpA family. In terms of assembly, the system is composed of three essential subunits: KdpA, KdpB and KdpC.

It localises to the cell inner membrane. Part of the high-affinity ATP-driven potassium transport (or Kdp) system, which catalyzes the hydrolysis of ATP coupled with the electrogenic transport of potassium into the cytoplasm. This subunit binds the periplasmic potassium ions and delivers the ions to the membrane domain of KdpB through an intramembrane tunnel. The polypeptide is Potassium-transporting ATPase potassium-binding subunit (Bordetella avium (strain 197N)).